The primary structure comprises 691 residues: Elongation factor G (691 aa).

The tr-type G domain occupies 8–282 (ERVRNIGIAA…AVVDYLPAPI (275 aa)). GTP contacts are provided by residues 17 to 24 (AHIDAGKT), 81 to 85 (DTPGH), and 135 to 138 (NKMD).

This sequence belongs to the TRAFAC class translation factor GTPase superfamily. Classic translation factor GTPase family. EF-G/EF-2 subfamily.

The protein resides in the cytoplasm. Functionally, catalyzes the GTP-dependent ribosomal translocation step during translation elongation. During this step, the ribosome changes from the pre-translocational (PRE) to the post-translocational (POST) state as the newly formed A-site-bound peptidyl-tRNA and P-site-bound deacylated tRNA move to the P and E sites, respectively. Catalyzes the coordinated movement of the two tRNA molecules, the mRNA and conformational changes in the ribosome. This chain is Elongation factor G, found in Synechococcus sp. (strain CC9311).